A 245-amino-acid polypeptide reads, in one-letter code: Eukaryotic translation initiation factor 3 subunit K (245 aa).

The PCI domain maps to tyrosine 46–asparagine 227.

The protein belongs to the eIF-3 subunit K family. As to quaternary structure, component of the eukaryotic translation initiation factor 3 (eIF-3) complex.

The protein resides in the cytoplasm. In terms of biological role, component of the eukaryotic translation initiation factor 3 (eIF-3) complex, which is involved in protein synthesis of a specialized repertoire of mRNAs and, together with other initiation factors, stimulates binding of mRNA and methionyl-tRNAi to the 40S ribosome. The eIF-3 complex specifically targets and initiates translation of a subset of mRNAs involved in cell proliferation. The protein is Eukaryotic translation initiation factor 3 subunit K of Botryotinia fuckeliana (strain B05.10) (Noble rot fungus).